A 709-amino-acid chain; its full sequence is Cell adhesion molecule CEACAM3 (709 aa).

The signal sequence occupies residues 1 to 34; sequence MELSSVLPCKRCTPWRGLLLTASLLTCWLLPTTA. Ig-like V-type domains are found at residues 35-142, 155-262, 275-382, 393-500, and 509-616; these read QVSI…HVYF, QLSI…QVDT, QLTV…QVNT, LLTI…SVHT, and QLVI…HIYK. N-linked (GlcNAc...) asparagine glycans are attached at residues asparagine 73, asparagine 86, asparagine 103, asparagine 110, asparagine 133, asparagine 207, asparagine 224, asparagine 231, asparagine 327, asparagine 344, asparagine 351, asparagine 381, asparagine 462, asparagine 561, asparagine 578, and asparagine 585. Residues 631–695 enclose the Ig-like C2-type domain; sequence RVKSSVVLTC…YRCEVSNPVS (65 aa).

It belongs to the immunoglobulin superfamily. CEA family. In terms of tissue distribution, expression detected only in placenta.

Its function is as follows. Possibly involved in cell adhesion. This Rattus norvegicus (Rat) protein is Cell adhesion molecule CEACAM3.